A 171-amino-acid chain; its full sequence is 6,7-dimethyl-8-ribityllumazine synthase (171 aa).

5-amino-6-(D-ribitylamino)uracil contacts are provided by residues Phe-24, 58–60 (ALE), and 82–84 (AVI). Position 87–88 (87–88 (ET)) interacts with (2S)-2-hydroxy-3-oxobutyl phosphate. Residue His-90 is the Proton donor of the active site. Position 115 (Asn-115) interacts with 5-amino-6-(D-ribitylamino)uracil. Residue Arg-129 coordinates (2S)-2-hydroxy-3-oxobutyl phosphate. The interval 150–171 (ALDQLGDDEDEEEDEEDEEERA) is disordered. Residues 154-171 (LGDDEDEEEDEEDEEERA) are compositionally biased toward acidic residues.

Belongs to the DMRL synthase family.

The catalysed reaction is (2S)-2-hydroxy-3-oxobutyl phosphate + 5-amino-6-(D-ribitylamino)uracil = 6,7-dimethyl-8-(1-D-ribityl)lumazine + phosphate + 2 H2O + H(+). It functions in the pathway cofactor biosynthesis; riboflavin biosynthesis; riboflavin from 2-hydroxy-3-oxobutyl phosphate and 5-amino-6-(D-ribitylamino)uracil: step 1/2. Catalyzes the formation of 6,7-dimethyl-8-ribityllumazine by condensation of 5-amino-6-(D-ribitylamino)uracil with 3,4-dihydroxy-2-butanone 4-phosphate. This is the penultimate step in the biosynthesis of riboflavin. In Burkholderia ambifaria (strain MC40-6), this protein is 6,7-dimethyl-8-ribityllumazine synthase.